We begin with the raw amino-acid sequence, 216 residues long: Protein shisa-5 (216 aa).

A signal peptide spans 1–26; that stretch reads MAAPAPAPRILVLLLLLLPAPEGAQS. The Extracellular segment spans residues 27–93; that stretch reads ELCMISHGRK…SGFDSDPVAR (67 aa). The chain crosses the membrane as a helical span at residues 94–114; sequence FGTVIAIGVTLFVIAVVTVIV. The Cytoplasmic portion of the chain corresponds to 115–216; it reads CCTCSCCCLY…AYMEPPKAVP (102 aa).

This sequence belongs to the shisa family. Interacts with PDCD6; PDCD6 can stabilize SHISA5.

It localises to the endoplasmic reticulum membrane. It is found in the nucleus membrane. Can induce apoptosis in a caspase-dependent manner and plays a role in p53/TP53-dependent apoptosis. The sequence is that of Protein shisa-5 (SHISA5) from Bos taurus (Bovine).